Consider the following 363-residue polypeptide: Aminomethyltransferase (363 aa).

The protein belongs to the GcvT family. The glycine cleavage system is composed of four proteins: P, T, L and H.

The catalysed reaction is N(6)-[(R)-S(8)-aminomethyldihydrolipoyl]-L-lysyl-[protein] + (6S)-5,6,7,8-tetrahydrofolate = N(6)-[(R)-dihydrolipoyl]-L-lysyl-[protein] + (6R)-5,10-methylene-5,6,7,8-tetrahydrofolate + NH4(+). In terms of biological role, the glycine cleavage system catalyzes the degradation of glycine. The polypeptide is Aminomethyltransferase (Staphylococcus epidermidis (strain ATCC 35984 / DSM 28319 / BCRC 17069 / CCUG 31568 / BM 3577 / RP62A)).